Here is a 369-residue protein sequence, read N- to C-terminus: Transforming protein Maf (369 aa).

Disordered regions lie at residues 57 to 85 (STPMSTPCSSVPPSPSFSAPSPGSGTDQK) and 169 to 243 (GGAP…GLHF). Over residues 173 to 183 (HYHHHHHHPHH) the composition is skewed to basic residues. Residues 184 to 193 (GGGGGGGGHP) show a composition bias toward gly residues. Over residues 194-211 (HGAAPGSAPPSSASSSAA) the composition is skewed to low complexity. Positions 212 to 226 (GSGGGGGGGGGGAGG) are enriched in gly residues. Positions 274 to 299 (RLKQKRRTLKNRGYAQSCRFKRVQQR) are basic motif. In terms of domain architecture, bZIP spans 274-337 (RLKQKRRTLK…DAYKEKYEKL (64 aa)). Positions 302–323 (LESEKNQLLQQVEHLKQEISRL) are leucine-zipper. The disordered stretch occupies residues 341 to 369 (GFRENGSSSDNPSSPEFFMYPRESSTTVM). Polar residues predominate over residues 345–354 (NGSSSDNPSS).

This sequence belongs to the bZIP family. Maf subfamily.

The protein resides in the host nucleus. Its function is as follows. Might be a transcriptional trans-activator. The chain is Transforming protein Maf (V-MAF) from Galliformes.